A 185-amino-acid chain; its full sequence is Ribosome-recycling factor (185 aa).

This sequence belongs to the RRF family.

Its subcellular location is the cytoplasm. Functionally, responsible for the release of ribosomes from messenger RNA at the termination of protein biosynthesis. May increase the efficiency of translation by recycling ribosomes from one round of translation to another. The protein is Ribosome-recycling factor of Streptococcus pneumoniae (strain P1031).